The primary structure comprises 270 residues: MHTVWKGALSLGLLNIGIKLYSAVDENDIKFLSLHKECLTPIKYKKFAPDCTDEEVDDKDIVKAYEYAPHKYIIMDEKELSALQKAHEPRSIRIISFIQNNEIDSVLYDRSYFIGPTPGHEKSYLLLKEALERTNKLGLIHISIRKKQHLAIIRNFEDGLMLQTIHYPNEIRDITNIPNLPSNENYPIQKQELTAAINLIHHLTNPFEQELYTDEYKEALTELIENKIEEQAKTESISPAPNIINIMETLQASIEQAKIKRDNKTEKEAK.

Residues Ser-10 to Thr-194 enclose the Ku domain.

Belongs to the prokaryotic Ku family. In terms of assembly, homodimer. Interacts with LigD.

With LigD forms a non-homologous end joining (NHEJ) DNA repair enzyme, which repairs dsDNA breaks with reduced fidelity. Binds linear dsDNA with 5'- and 3'- overhangs but not closed circular dsDNA nor ssDNA. Recruits and stimulates the ligase activity of LigD. This chain is Non-homologous end joining protein Ku, found in Bacillus thuringiensis subsp. konkukian (strain 97-27).